The primary structure comprises 95 residues: Neutrophil antibiotic peptide NP-5 (95 aa).

An N-terminal signal peptide occupies residues 1 to 19 (MRTLALLAAILLVTLQAQA). Positions 20 to 62 (ELHSGMADDGVDQQQPRAQDLDVAVYIKQDETSPLEVLGAKAG) are excised as a propeptide. Intrachain disulfides connect Cys-65-Cys-93, Cys-67-Cys-82, and Cys-72-Cys-92.

Belongs to the alpha-defensin family.

It is found in the secreted. Its function is as follows. Microbicidal activity. The chain is Neutrophil antibiotic peptide NP-5 from Oryctolagus cuniculus (Rabbit).